We begin with the raw amino-acid sequence, 235 residues long: tRNA (guanine-N(1)-)-methyltransferase (235 aa).

S-adenosyl-L-methionine-binding positions include G112 and 132–137 (LGDFVL).

It belongs to the RNA methyltransferase TrmD family. In terms of assembly, homodimer.

The protein localises to the cytoplasm. It catalyses the reaction guanosine(37) in tRNA + S-adenosyl-L-methionine = N(1)-methylguanosine(37) in tRNA + S-adenosyl-L-homocysteine + H(+). Functionally, specifically methylates guanosine-37 in various tRNAs. The polypeptide is tRNA (guanine-N(1)-)-methyltransferase (Acaryochloris marina (strain MBIC 11017)).